The chain runs to 426 residues: Serine--tRNA ligase (426 aa).

Residues 41–60 are compositionally biased toward polar residues; the sequence is QTRTEQLQAERNARSKSIGQ. Positions 41 to 64 are disordered; the sequence is QTRTEQLQAERNARSKSIGQAKQR. An L-serine-binding site is contributed by 233–235; it reads TAE. 264–266 contributes to the ATP binding site; sequence RSE. E287 lines the L-serine pocket. 351–354 contacts ATP; that stretch reads EISS. S387 is an L-serine binding site.

It belongs to the class-II aminoacyl-tRNA synthetase family. Type-1 seryl-tRNA synthetase subfamily. Homodimer. The tRNA molecule binds across the dimer.

Its subcellular location is the cytoplasm. It catalyses the reaction tRNA(Ser) + L-serine + ATP = L-seryl-tRNA(Ser) + AMP + diphosphate + H(+). The catalysed reaction is tRNA(Sec) + L-serine + ATP = L-seryl-tRNA(Sec) + AMP + diphosphate + H(+). Its pathway is aminoacyl-tRNA biosynthesis; selenocysteinyl-tRNA(Sec) biosynthesis; L-seryl-tRNA(Sec) from L-serine and tRNA(Sec): step 1/1. In terms of biological role, catalyzes the attachment of serine to tRNA(Ser). Is also able to aminoacylate tRNA(Sec) with serine, to form the misacylated tRNA L-seryl-tRNA(Sec), which will be further converted into selenocysteinyl-tRNA(Sec). This Pseudomonas fluorescens (strain ATCC BAA-477 / NRRL B-23932 / Pf-5) protein is Serine--tRNA ligase.